A 178-amino-acid polypeptide reads, in one-letter code: Transcription factor E (178 aa).

The HTH TFE/IIEalpha-type domain occupies 4–88 (AEDLFINLAK…YWKPNIDQIN (85 aa)).

This sequence belongs to the TFE family. As to quaternary structure, monomer. Interaction with RNA polymerase subunits RpoF and RpoE is necessary for Tfe stimulatory transcription activity. Able to interact with Tbp and RNA polymerase in the absence of DNA promoter. Interacts both with the preinitiation and elongation complexes.

Its function is as follows. Transcription factor that plays a role in the activation of archaeal genes transcribed by RNA polymerase. Facilitates transcription initiation by enhancing TATA-box recognition by TATA-box-binding protein (Tbp), and transcription factor B (Tfb) and RNA polymerase recruitment. Not absolutely required for transcription in vitro, but particularly important in cases where Tbp or Tfb function is not optimal. It dynamically alters the nucleic acid-binding properties of RNA polymerases by stabilizing the initiation complex and destabilizing elongation complexes. Seems to translocate with the RNA polymerase following initiation and acts by binding to the non template strand of the transcription bubble in elongation complexes. The protein is Transcription factor E of Saccharolobus islandicus (strain L.S.2.15 / Lassen #1) (Sulfolobus islandicus).